Reading from the N-terminus, the 240-residue chain is uncharacterized protein (240 aa).

The N-terminal stretch at methionine 1–alanine 17 is a signal peptide.

This is an uncharacterized protein from Treponema pallidum (strain Nichols).